The sequence spans 363 residues: DNA replication and repair protein RecF (363 aa).

Position 30 to 37 (30 to 37) interacts with ATP; sequence GPNGSGKT.

Belongs to the RecF family.

Its subcellular location is the cytoplasm. The RecF protein is involved in DNA metabolism; it is required for DNA replication and normal SOS inducibility. RecF binds preferentially to single-stranded, linear DNA. It also seems to bind ATP. The protein is DNA replication and repair protein RecF of Chlorobium limicola (strain DSM 245 / NBRC 103803 / 6330).